A 396-amino-acid polypeptide reads, in one-letter code: NADH-quinone oxidoreductase subunit D (396 aa).

It belongs to the complex I 49 kDa subunit family. In terms of assembly, NDH-1 is composed of 14 different subunits. Subunits NuoB, C, D, E, F, and G constitute the peripheral sector of the complex.

Its subcellular location is the cell inner membrane. The catalysed reaction is a quinone + NADH + 5 H(+)(in) = a quinol + NAD(+) + 4 H(+)(out). Its function is as follows. NDH-1 shuttles electrons from NADH, via FMN and iron-sulfur (Fe-S) centers, to quinones in the respiratory chain. The immediate electron acceptor for the enzyme in this species is believed to be ubiquinone. Couples the redox reaction to proton translocation (for every two electrons transferred, four hydrogen ions are translocated across the cytoplasmic membrane), and thus conserves the redox energy in a proton gradient. This Methylorubrum extorquens (strain PA1) (Methylobacterium extorquens) protein is NADH-quinone oxidoreductase subunit D.